A 213-amino-acid chain; its full sequence is Transmembrane protein 186 (213 aa).

Residues 1-79 (MAALLRAVRR…FLSRLKLAQT (79 aa)) lie on the Mitochondrial matrix side of the membrane. The helical transmembrane segment at 80–100 (ALTVVALPPGYYLYSQGLLTL) threads the bilayer. Residues 101-102 (NT) are Mitochondrial intermembrane-facing. The helical transmembrane segment at 103-123 (VCLMSGISGFALTMLCWMSYF) threads the bilayer. Topologically, residues 124-213 (LRRLVGILYL…QVFGVHQMLK (90 aa)) are mitochondrial matrix.

It belongs to the TMEM186 family. As to quaternary structure, part of the mitochondrial complex I assembly/MCIA complex that comprises at least the core subunits TMEM126B, NDUFAF1, ECSIT and ACAD9 and complement subunits such as COA1 and TMEM186. Interacts with MT-ND3.

It is found in the mitochondrion inner membrane. As part of the MCIA complex, required for efficient assembly of the mitochondrial complex I. This is Transmembrane protein 186 from Homo sapiens (Human).